A 176-amino-acid chain; its full sequence is Flavodoxin 1 (176 aa).

One can recognise a Flavodoxin-like domain in the interval 4–165 (TGIFFGSDTG…RVEKWVKQVS (162 aa)).

Belongs to the flavodoxin family. Requires FMN as cofactor.

Functionally, low-potential electron donor to a number of redox enzymes (Potential). Involved in the reactivation of inactive cob(II)alamin in methionine synthase. This chain is Flavodoxin 1 (fldA), found in Salmonella typhimurium (strain LT2 / SGSC1412 / ATCC 700720).